Reading from the N-terminus, the 297-residue chain is NAC domain-containing protein 72 (297 aa).

The region spanning 14 to 162 is the NAC domain; the sequence is LPPGFRFYPT…DWVLCRIYKK (149 aa). The DNA-binding element occupies 111–168; it reads VGIKKALVFYAGKAPKGTKTNWIMHEYRLIEHSRSHGSSKLDDWVLCRIYKKTSGSQR. 2 disordered regions span residues 168 to 195 and 259 to 278; these read RQAV…SQLD and GEAE…LTQS. The span at 266–277 shows a compositional bias: polar residues; that stretch reads VNRQQNSSGLTQ.

Expressed in leaves and in root pericycle and epidermis.

Its subcellular location is the nucleus. Transcription factors that bind specifically to the 5'-CATGTG-3' motif and with bipartite regions with 5'-CGTr-3' and 5'-YACG-3' as cores. Involved in the regulation of metabolic reprogramming during senescence by promoting the chloroplast protein degradation and the catabolism of lysine, phytol and free fatty acids via the induction of CV, LKR/SDH and PES1 expression. Also triggers the degradation of starch and the accumulation of mono- and disaccharides during senescence by enhancing the expression of AMY1, SFP1 and SWEET15. In Arabidopsis thaliana (Mouse-ear cress), this protein is NAC domain-containing protein 72.